The chain runs to 284 residues: Steroidogenic acute regulatory protein, mitochondrial (284 aa).

The N-terminal 62 residues, 1 to 62, are a transit peptide targeting the mitochondrion; the sequence is MLLATFKLCA…RRSSLLGSQL (62 aa). A phosphoserine; by PKA mark is found at Ser56 and Ser194. Residues 66 to 279 form the START domain; it reads LYSDQELSYI…LRKRLESSPA (214 aa).

May interact with TSPO.

The protein localises to the mitochondrion. The catalysed reaction is cholesterol(in) = cholesterol(out). It functions in the pathway steroid metabolism; cholesterol metabolism. Plays a key role in steroid hormone synthesis by enhancing the metabolism of cholesterol into pregnenolone. Mediates the transfer of cholesterol from the outer mitochondrial membrane to the inner mitochondrial membrane where it is cleaved to pregnenolone. This chain is Steroidogenic acute regulatory protein, mitochondrial (Star), found in Rattus norvegicus (Rat).